Reading from the N-terminus, the 288-residue chain is Bifunctional protein FolD (288 aa).

Residues 166-168 and Ile232 contribute to the NADP(+) site; that span reads GAS.

Belongs to the tetrahydrofolate dehydrogenase/cyclohydrolase family. In terms of assembly, homodimer.

It catalyses the reaction (6R)-5,10-methylene-5,6,7,8-tetrahydrofolate + NADP(+) = (6R)-5,10-methenyltetrahydrofolate + NADPH. It carries out the reaction (6R)-5,10-methenyltetrahydrofolate + H2O = (6R)-10-formyltetrahydrofolate + H(+). It functions in the pathway one-carbon metabolism; tetrahydrofolate interconversion. Functionally, catalyzes the oxidation of 5,10-methylenetetrahydrofolate to 5,10-methenyltetrahydrofolate and then the hydrolysis of 5,10-methenyltetrahydrofolate to 10-formyltetrahydrofolate. This is Bifunctional protein FolD from Salmonella heidelberg (strain SL476).